The following is a 69-amino-acid chain: Small ribosomal subunit protein uS14 (69 aa).

Positions 33, 36, 51, and 54 each coordinate Zn(2+).

It belongs to the universal ribosomal protein uS14 family. Zinc-binding uS14 subfamily. Part of the 30S ribosomal subunit. Zn(2+) is required as a cofactor.

In terms of biological role, binds 16S rRNA, required for the assembly of 30S particles. The polypeptide is Small ribosomal subunit protein uS14 (Nanoarchaeum equitans (strain Kin4-M)).